We begin with the raw amino-acid sequence, 74 residues long: MATIFDILNTHNNNNNFENCKRQCSTNKSNKTIIDILPSMDVTMTNDKLIIETELAGISKDHIEIDIKDSILTI.

The sHSP domain occupies 31 to 74 (KTIIDILPSMDVTMTNDKLIIETELAGISKDHIEIDIKDSILTI).

It belongs to the small heat shock protein (HSP20) family.

This chain is Small heat shock protein hspG10 (hspG10), found in Dictyostelium discoideum (Social amoeba).